The sequence spans 1147 residues: uncharacterized protein (1147 aa).

Disordered stretches follow at residues 226-245 (FGQGQQDLDEGEAGAGGQVD), 255-297 (IQGT…QEKA), 431-617 (SQHP…QSCI), 647-670 (EEMDDHEEGGELRENHPDAQDPVR), 705-945 (HRHR…RRLQ), 1003-1032 (RQQQEEFRRKCQELQRKKQQEEAERAEAEK), and 1060-1090 (YQRRKQEAEEKTRWEAEDRRQKEKEAARLAQ). Residues 268–296 (WQKDETQTEDTSKDNHHCIHTSKENHQEK) show a composition bias toward basic and acidic residues. Basic residues predominate over residues 431–441 (SQHPPKGKAQR). Over residues 538 to 549 (PAGGALPAAGQA) the composition is skewed to low complexity. The segment covering 584-603 (LNETSPLTQKPENQGAQQSL) has biased composition (polar residues). Positions 743–752 (NQKTSNNISN) are enriched in polar residues. Residues 743-804 (NQKTSNNISN…ESKAEKKSQL (62 aa)) adopt a coiled-coil conformation. Residues 768–802 (TDKSKAPKREKEGKLHEEAEAAVGKSKESKAEKKS) show a composition bias toward basic and acidic residues. Positions 807–819 (KGKKTGAKGKRTR) are enriched in basic residues. Over residues 870-884 (SQVSIDGRSSPTQTA) the composition is skewed to polar residues. The span at 895 to 945 (DRSHEDPSKAFLVKREQEKASRDRLRAERAEMRRLEVERKRREQEEQRRLQ) shows a compositional bias: basic and acidic residues. Residues 907–1112 (VKREQEKASR…QKDALKKHLH (206 aa)) are a coiled coil.

This is an uncharacterized protein from Bos taurus (Bovine).